A 495-amino-acid polypeptide reads, in one-letter code: Glucose-6-phosphate 1-dehydrogenase (495 aa).

NADP(+) contacts are provided by residues 11–18 (GASGDLAK), Arg45, 84–85 (DV), and Lys147. His177, Lys181, Glu215, and Asp234 together coordinate substrate. His239 (proton acceptor) is an active-site residue. Lys339 and Lys344 together coordinate substrate.

The protein belongs to the glucose-6-phosphate dehydrogenase family.

It catalyses the reaction D-glucose 6-phosphate + NADP(+) = 6-phospho-D-glucono-1,5-lactone + NADPH + H(+). The protein operates within carbohydrate degradation; pentose phosphate pathway; D-ribulose 5-phosphate from D-glucose 6-phosphate (oxidative stage): step 1/3. Catalyzes the oxidation of glucose 6-phosphate to 6-phosphogluconolactone. The polypeptide is Glucose-6-phosphate 1-dehydrogenase (Streptococcus pneumoniae serotype 4 (strain ATCC BAA-334 / TIGR4)).